The sequence spans 416 residues: Gamma-glutamyl phosphate reductase (416 aa).

Belongs to the gamma-glutamyl phosphate reductase family.

Its subcellular location is the cytoplasm. The catalysed reaction is L-glutamate 5-semialdehyde + phosphate + NADP(+) = L-glutamyl 5-phosphate + NADPH + H(+). Its pathway is amino-acid biosynthesis; L-proline biosynthesis; L-glutamate 5-semialdehyde from L-glutamate: step 2/2. Its function is as follows. Catalyzes the NADPH-dependent reduction of L-glutamate 5-phosphate into L-glutamate 5-semialdehyde and phosphate. The product spontaneously undergoes cyclization to form 1-pyrroline-5-carboxylate. This is Gamma-glutamyl phosphate reductase from Streptococcus pyogenes serotype M49 (strain NZ131).